The chain runs to 432 residues: Cyclic GMP-AMP synthase-like receptor (432 aa).

ATP is bound by residues S59 and 71 to 73 (EFD). The Mg(2+) site is built by E71, D73, and D205. Residues D205 and 255-262 (KQTCSVLE) each bind GTP. ATP-binding positions include 259-262 (SVLE), K284, and 303-307 (TYALK).

Belongs to the mab-21 family. The cofactor is Mg(2+). Mn(2+) is required as a cofactor.

The enzyme catalyses GTP + ATP = 2',3'-cGAMP + 2 diphosphate. It carries out the reaction GTP + ATP = pppGp(2'-5')A + diphosphate. The catalysed reaction is pppGp(2'-5')A = 2',3'-cGAMP + diphosphate. Nucleotidyltransferase that catalyzes the formation of cyclic GMP-AMP (2',3'-cGAMP) from ATP and GTP and plays a key role in innate immunity. Directly binds some unknown ligand, activating the nucleotidyltransferase activity, leading to synthesis of 2',3'-cGAMP, a second messenger that binds to and activates Sting, thereby triggering the immune response via activation of the NF-kappa-B transcription factor. This is Cyclic GMP-AMP synthase-like receptor from Pocillopora damicornis (Cauliflower coral).